We begin with the raw amino-acid sequence, 912 residues long: Probable transmembrane GTPase FZO-like, chloroplastic (912 aa).

A chloroplast-targeting transit peptide spans 1 to 54; the sequence is MRTLISHRQCVTSPFLISAASPPFPGRCFKLSSFTPPRHRRFSSLSIRNISHES. A disordered region spans residues 51–71; that stretch reads SHESADQTSSSRPRTLYPGGY. Residues 55–773 lie on the Stromal side of the membrane; sequence ADQTSSSRPR…SKRLEQDIRE (719 aa). Residues 359 to 364 and S521 contribute to the GTP site; that span reads NSGKST. The chain crosses the membrane as a helical span at residues 774–794; the sequence is VFFVTVGGLGAAGLSASLLTS. The Chloroplast intermembrane portion of the chain corresponds to 795 to 801; the sequence is VLPTTLE. Residues 802–822 form a helical membrane-spanning segment; that stretch reads DLLALGLCSAGGYVAIANFPY. Over 823-912 the chain is Stromal; that stretch reads RRQAIIGKVN…LHVSRDEMRL (90 aa). The stretch at 877 to 904 forms a coiled coil; that stretch reads DRLLGIQKELSDIRSKLQLLQVDIDNLH.

This sequence belongs to the TRAFAC class dynamin-like GTPase superfamily. Dynamin/Fzo/YdjA family. Mitofusin subfamily.

It localises to the plastid. It is found in the chloroplast inner membrane. The protein resides in the chloroplast thylakoid membrane. In terms of biological role, probable membrane-remodeling GTPase that plays a unique role in the in the determination of thylakoid and chloroplast morphology and regulates organization of the thylakoid network. Not involved in the determination of mitochondrial morphology or ultrastructure. The polypeptide is Probable transmembrane GTPase FZO-like, chloroplastic (Arabidopsis thaliana (Mouse-ear cress)).